Consider the following 134-residue polypeptide: Ribonuclease VapC1 (134 aa).

Residues 3 to 132 form the PINc domain; sequence YMLDTNIIIY…RITDLQWQDW (130 aa). Residues Asp6 and Asp99 each coordinate Mg(2+).

The protein belongs to the PINc/VapC protein family. It depends on Mg(2+) as a cofactor.

Toxic component of a type II toxin-antitoxin (TA) system. Acts as an RNase, its toxic effect is neutralized by VapB1 antitoxin. The protein is Ribonuclease VapC1 of Haemophilus influenzae (strain ATCC 51907 / DSM 11121 / KW20 / Rd).